Reading from the N-terminus, the 781-residue chain is MSISLIQPERDLFSYQPYWAECYGTAPFLPMSREEMDILGWDSCDIIVITGDAYVDHPSFGMAIVGRMLEAQGFRVGIIAQPDWTNKHDFMRLGEPNLFFGVTAGNMDSMINRYTADRKLRHDDAYTPDNQSGKRPDRATLVYSQRCKEAYSHVPVLLGGIEASLRRIAHYDYWSDTVRRSVIVDAKADMLVYGNGERPLVEVAHRLAAGEKITDIQDVRNTVVMRKTPLPGWSGVDSTRLDKPGRIEAIPNPYGEDLPCATDDISIPEAKPITVRAAKPKPWEKTYVLLPSYEKVKADKVLYAHTSRILHHETNPGCARALMQKHGDRYIWINPPAIPLSTEEMDSVFALPYQRVPHPSYGKSPIPAYDMIRFSINIMRGCYGGCSFCSITEHEGRIIQSRSEDSIIREIEEIRDKVPGFTGIISDLGGPTANMYMLRCQSPRAEQTCRRASCVYPEICPHMDTNHQPTISLYRRARDLKGIKKILIASGVRYDLAVEDPRYIKELASHHVGGYLKIAPEHTEEGPLSKMMKPGMGSYQRFKELFDTYSKQAGKEQYLIPYFISAHPGTEDKDMVNLALWLKKNRFRLDQVQNFYPSPLANSTTMYYTGKNPLAKVDYKSEEVVVPKGDRQRRLHKALLRYHDPANWPMLRSALEDMGLQHLIGARRECLVPAPTLEEQREARRALRHHTPALTKHTSITRQRQPSNRAPAASAGKKAPTVANGTSSAHSTSANQSTSANQSTSAAHSTLATKKSAGKTGVNKAAVNKPSAGSRGKNRQH.

The Radical SAM core domain maps to 368–646 (AYDMIRFSIN…KALLRYHDPA (279 aa)). Positions 382, 386, and 389 each coordinate [4Fe-4S] cluster. The segment at 681–781 (REARRALRHH…AGSRGKNRQH (101 aa)) is disordered. Positions 696-708 (KHTSITRQRQPSN) are enriched in polar residues. The span at 726–750 (TSSAHSTSANQSTSANQSTSAAHST) shows a compositional bias: low complexity.

Belongs to the UPF0313 family. [4Fe-4S] cluster serves as cofactor.

In Yersinia pestis, this protein is Putative UPF0313 protein YPO0674/y3502/YP_2990.